The primary structure comprises 597 residues: Aspartate--tRNA(Asp/Asn) ligase (597 aa).

Glutamate 175 provides a ligand contact to L-aspartate. Residues glutamine 199–lysine 202 form an aspartate region. Arginine 221 is an L-aspartate binding site. ATP contacts are provided by residues arginine 221–glutamate 223 and glutamine 230. Position 453 (histidine 453) interacts with L-aspartate. Glutamate 487 lines the ATP pocket. Arginine 494 contacts L-aspartate. Glycine 539–arginine 542 lines the ATP pocket. A disordered region spans residues serine 562 to asparagine 597. The span at glutamate 579–lysine 589 shows a compositional bias: basic and acidic residues.

Belongs to the class-II aminoacyl-tRNA synthetase family. Type 1 subfamily. As to quaternary structure, homodimer.

The protein localises to the cytoplasm. It carries out the reaction tRNA(Asx) + L-aspartate + ATP = L-aspartyl-tRNA(Asx) + AMP + diphosphate. In terms of biological role, aspartyl-tRNA synthetase with relaxed tRNA specificity since it is able to aspartylate not only its cognate tRNA(Asp) but also tRNA(Asn). Reaction proceeds in two steps: L-aspartate is first activated by ATP to form Asp-AMP and then transferred to the acceptor end of tRNA(Asp/Asn). The polypeptide is Aspartate--tRNA(Asp/Asn) ligase (Corynebacterium kroppenstedtii (strain DSM 44385 / JCM 11950 / CIP 105744 / CCUG 35717)).